The following is a 226-amino-acid chain: ATP synthase F(0) complex subunit a (226 aa).

Transmembrane regions (helical) follow at residues 6–26 (FATF…IMLF), 68–88 (WALM…LGLL), 97–117 (QLSM…LMGF), 138–158 (VPML…ALAV), 164–184 (ITAG…LCSI), and 193–213 (FIIL…QAYV).

This sequence belongs to the ATPase A chain family. In terms of assembly, component of the ATP synthase complex composed at least of ATP5F1A/subunit alpha, ATP5F1B/subunit beta, ATP5MC1/subunit c (homooctomer), MT-ATP6/subunit a, MT-ATP8/subunit 8, ATP5ME/subunit e, ATP5MF/subunit f, ATP5MG/subunit g, ATP5MK/subunit k, ATP5MJ/subunit j, ATP5F1C/subunit gamma, ATP5F1D/subunit delta, ATP5F1E/subunit epsilon, ATP5PF/subunit F6, ATP5PB/subunit b, ATP5PD/subunit d, ATP5PO/subunit OSCP. ATP synthase complex consists of a soluble F(1) head domain (subunits alpha(3) and beta(3)) - the catalytic core - and a membrane F(0) domain - the membrane proton channel (subunits c, a, 8, e, f, g, k and j). These two domains are linked by a central stalk (subunits gamma, delta, and epsilon) rotating inside the F1 region and a stationary peripheral stalk (subunits F6, b, d, and OSCP). Interacts with DNAJC30; interaction is direct.

It localises to the mitochondrion inner membrane. It catalyses the reaction H(+)(in) = H(+)(out). Its function is as follows. Subunit a, of the mitochondrial membrane ATP synthase complex (F(1)F(0) ATP synthase or Complex V) that produces ATP from ADP in the presence of a proton gradient across the membrane which is generated by electron transport complexes of the respiratory chain. ATP synthase complex consist of a soluble F(1) head domain - the catalytic core - and a membrane F(1) domain - the membrane proton channel. These two domains are linked by a central stalk rotating inside the F(1) region and a stationary peripheral stalk. During catalysis, ATP synthesis in the catalytic domain of F(1) is coupled via a rotary mechanism of the central stalk subunits to proton translocation. With the subunit c (ATP5MC1), forms the proton-conducting channel in the F(0) domain, that contains two crucial half-channels (inlet and outlet) that facilitate proton movement from the mitochondrial intermembrane space (IMS) into the matrix. Protons are taken up via the inlet half-channel and released through the outlet half-channel, following a Grotthuss mechanism. The protein is ATP synthase F(0) complex subunit a of Osphranter robustus (Wallaroo).